We begin with the raw amino-acid sequence, 299 residues long: Transcription factor srbB (299 aa).

Disordered stretches follow at residues 1 to 33 (MAYN…DPLS) and 81 to 204 (ISGF…NAAK). Over residues 161 to 170 (PVTSQATTSP) the composition is skewed to low complexity. Residues 188–199 (RSLSTDSQTATG) show a composition bias toward polar residues. Residues 203–216 (AKRAAHNIIEKRYR) are basic motif. A bHLH domain is found at 203–264 (AKRAAHNIIE…TNAIAYMQEL (62 aa)). The helix-loop-helix motif stretch occupies residues 217 to 264 (TNMNAKFVALEKAMSGSGVQKPTKGGSGPASLKKSEILTNAIAYMQEL). Positions 254-281 (LTNAIAYMQELQDQNAALQKELALLKQN) form a coiled coil.

The protein resides in the nucleus. Key transcription factors critical for hypoxia adaptation and virulence. Plays a major role in regulation of heme biosynthesis and carbohydrate metabolism early in the response to hypoxia. The polypeptide is Transcription factor srbB (Aspergillus fumigatus (strain ATCC MYA-4609 / CBS 101355 / FGSC A1100 / Af293) (Neosartorya fumigata)).